A 140-amino-acid polypeptide reads, in one-letter code: L-fucose mutarotase (140 aa).

The active-site Proton donor is H22. Residues D30, R107, and 129-131 (YGN) each bind substrate.

It belongs to the RbsD / FucU family. FucU mutarotase subfamily. In terms of assembly, homodecamer.

Its subcellular location is the cytoplasm. The catalysed reaction is alpha-L-fucose = beta-L-fucose. Its pathway is carbohydrate metabolism; L-fucose metabolism. In terms of biological role, involved in the anomeric conversion of L-fucose. The chain is L-fucose mutarotase from Citrobacter koseri (strain ATCC BAA-895 / CDC 4225-83 / SGSC4696).